A 514-amino-acid chain; its full sequence is CENP-B homolog protein 1 (514 aa).

Residues 69 to 144 (DIKKIRAPKF…RRRHYIQQSA (76 aa)) enclose the HTH CENPB-type domain.

It is found in the nucleus. The protein resides in the chromosome. Its subcellular location is the centromere. In terms of biological role, binds to centromeric K-type repeat DNA and ARS3002 DNA. The CBH-binding consensus sequence is Py-Pu-A-T-A-T-Py-Pu-T-A. The protein is CENP-B homolog protein 1 (cbh1) of Schizosaccharomyces pombe (strain 972 / ATCC 24843) (Fission yeast).